We begin with the raw amino-acid sequence, 416 residues long: (S)-ureidoglycine--glyoxylate transaminase (416 aa).

At Lys198 the chain carries N6-(pyridoxal phosphate)lysine.

This sequence belongs to the class-V pyridoxal-phosphate-dependent aminotransferase family. As to quaternary structure, homodimer. It depends on pyridoxal 5'-phosphate as a cofactor.

It carries out the reaction (S)-2-ureidoglycine + glyoxylate = N-carbamoyl-2-oxoglycine + glycine. The protein operates within nitrogen metabolism; (S)-allantoin degradation. In terms of biological role, catalyzes the transamination between an unstable intermediate ((S)-ureidoglycine) and the end product of purine catabolism (glyoxylate) to yield oxalurate and glycine. Glyoxylate is the preferred substrate, but other amino-group acceptors can be used. In Bacillus subtilis (strain 168), this protein is (S)-ureidoglycine--glyoxylate transaminase.